A 355-amino-acid chain; its full sequence is Natterin-1 (355 aa).

An N-terminal signal peptide occupies residues 1 to 18; it reads MIPSVLLVTLLLLSWTSA. Positions 19–27 are excised as a propeptide; sequence EKDLKVRVA.

The protein belongs to the natterin family. Contains 4 disulfide bonds. Expressed by the venom gland.

The protein resides in the secreted. Its activity is regulated as follows. Inhibited by tissue-kallikrein inhibitor TKI and trasylol. Plasma kallikrein inhibitor PKSI527 and classical inhibitors of serine-, metallo-, thiol- or aspartate-peptidases evokes a minor inhibition of the peptide digestion. In terms of biological role, shows nociceptive, edema-inducing and kininogenase activity with release of kallidin from low molecular weight kininogen. The cleavage occurs at Met-Lys bonds. The protein is Natterin-1 of Thalassophryne nattereri (Copper Joe toadfish).